The following is a 1104-amino-acid chain: Lon protease homolog, mitochondrial (1104 aa).

Residues 1-58 (MLPLRAFARLAQRPRLSRPTQLARSSLPRPSPSRPAAHYLALAPAPSTRFLHSSPPVL) constitute a mitochondrion transit peptide. 2 disordered regions span residues 8–144 (ARLA…KEVA) and 275–295 (EGSQ…SEVP). The segment covering 22–46 (LARSSLPRPSPSRPAAHYLALAPAP) has biased composition (low complexity). The segment covering 80 to 103 (KQDDQVEKPLPDAESSKSAEERAK) has biased composition (basic and acidic residues). The span at 104 to 128 (SQSSKPDIKASSSDSVSSSAPAPGS) shows a compositional bias: low complexity. Positions 129-139 (ADGGSPPGAGG) are enriched in gly residues. Residues 155 to 444 (VLAIPITHRP…RALVLLKKEL (290 aa)) enclose the Lon N-terminal domain. Residues 281–291 (AKGEGEVKSFE) are compositionally biased toward basic and acidic residues. 597 to 604 (GPPGVGKT) lines the ATP pocket. The Lon proteolytic domain maps to 895–1082 (SPPAGVSTGL…RQVLHEAFRG (188 aa)). Residues Ser-987 and Lys-1030 contribute to the active site.

Belongs to the peptidase S16 family. In terms of assembly, homohexamer or homoheptamer. Organized in a ring with a central cavity.

The protein resides in the mitochondrion matrix. The enzyme catalyses Hydrolysis of proteins in presence of ATP.. Its function is as follows. ATP-dependent serine protease that mediates the selective degradation of misfolded, unassembled or oxidatively damaged polypeptides as well as certain short-lived regulatory proteins in the mitochondrial matrix. May also have a chaperone function in the assembly of inner membrane protein complexes. Participates in the regulation of mitochondrial gene expression and in the maintenance of the integrity of the mitochondrial genome. Binds to mitochondrial DNA in a site-specific manner. In Cryptococcus neoformans var. neoformans serotype D (strain JEC21 / ATCC MYA-565) (Filobasidiella neoformans), this protein is Lon protease homolog, mitochondrial.